Consider the following 283-residue polypeptide: Non-selective voltage-gated ion channel VDAC3 (283 aa).

Cys2 is modified (N-acetylcysteine). Residue Thr4 is modified to Phosphothreonine. N6-acetyllysine occurs at positions 12, 15, and 20. 2 consecutive transmembrane segments (beta stranded) span residues 26–35 (MVKIDLKTKS) and 39–47 (VEFSTSGHA). Lys53 is covalently cross-linked (Glycyl lysine isopeptide (Lys-Gly) (interchain with G-Cter in ubiquitin)). A run of 3 beta stranded transmembrane segments spans residues 54–64 (ASGNLETKYKV), 69–76 (LTFTQKWN), and 80–89 (TLGTEISWEN). Lys90 is subject to N6-acetyllysine. A beta stranded transmembrane segment spans residues 95–104 (LKLTLDTIFV). Glycyl lysine isopeptide (Lys-Gly) (interchain with G-Cter in ubiquitin) cross-links involve residues Lys109 and Lys110. 10 beta stranded membrane passes run 111–120 (SGKLKASYRR), 123–130 (FSLGSNVD), 137–145 (TIYGWAVLA), 150–158 (LAGYQMSFD), 163–175 (KLSQNNFALGYKA), 178–185 (FQLHTHVN), 189–198 (EFGGSIYQKV), 202–211 (IETSINLAWT), 218–227 (RFGIAAKYKL), and 231–238 (TSLSAKVN). A Phosphoserine modification is found at Ser241. NAD(+) contacts are provided by residues 242-244 (LIG) and 260-264 (SALID). Beta stranded transmembrane passes span 242–251 (LIGLGYTQTL) and 254–263 (GVKLTLSALI). At Lys266 the chain carries N6-acetyllysine; alternate. Lys266 is covalently cross-linked (Glycyl lysine isopeptide (Lys-Gly) (interchain with G-Cter in ubiquitin); alternate). A beta stranded transmembrane segment spans residues 273-282 (HKVGLGFELE).

The protein belongs to the eukaryotic mitochondrial porin family. Interacts with ARMC12 in a TBC1D21-dependent manner. Interacts with MISFA. Ubiquitinated by PRKN during mitophagy, leading to its degradation and enhancement of mitophagy. Deubiquitinated by USP30. In terms of tissue distribution, highest levels of expression detected in testis, less but still abundant expression in heart, kidney, brain, and skeletal muscle.

It is found in the mitochondrion outer membrane. The protein localises to the membrane. The catalysed reaction is chloride(in) = chloride(out). It catalyses the reaction K(+)(in) = K(+)(out). In terms of biological role, non-selective voltage-gated ion channel that mediates the transport of anions and cations through the mitochondrion outer membrane and plasma membrane. Forms a high-conducting channel with a stable open state and a voltage-induced closure with a mild preference for anions over cations. Involved in male fertility and sperm mitochondrial sheath formation. The protein is Non-selective voltage-gated ion channel VDAC3 of Mus musculus (Mouse).